We begin with the raw amino-acid sequence, 148 residues long: Large ribosomal subunit protein bL9 (148 aa).

Belongs to the bacterial ribosomal protein bL9 family.

Its function is as follows. Binds to the 23S rRNA. This chain is Large ribosomal subunit protein bL9, found in Chromohalobacter salexigens (strain ATCC BAA-138 / DSM 3043 / CIP 106854 / NCIMB 13768 / 1H11).